The chain runs to 153 residues: 3-hydroxyacyl-[acyl-carrier-protein] dehydratase FabZ (153 aa).

Residue His-47 is part of the active site.

It belongs to the thioester dehydratase family. FabZ subfamily.

Its subcellular location is the cytoplasm. It catalyses the reaction a (3R)-hydroxyacyl-[ACP] = a (2E)-enoyl-[ACP] + H2O. In terms of biological role, involved in unsaturated fatty acids biosynthesis. Catalyzes the dehydration of short chain beta-hydroxyacyl-ACPs and long chain saturated and unsaturated beta-hydroxyacyl-ACPs. This is 3-hydroxyacyl-[acyl-carrier-protein] dehydratase FabZ from Dichelobacter nodosus (strain VCS1703A).